Reading from the N-terminus, the 778-residue chain is Serine/threonine-protein kinase BRSK1 (778 aa).

Positions 1–12 (MSSGAKEGGGGS) are enriched in gly residues. The disordered stretch occupies residues 1–29 (MSSGAKEGGGGSPAYHLPHPHPHPPQHAQ). In terms of domain architecture, Protein kinase spans 34 to 285 (YRLEKTLGKG…LEQIQKHPWY (252 aa)). ATP contacts are provided by residues 40-48 (LGKGQTGLV) and lysine 63. Catalysis depends on aspartate 156, which acts as the Proton acceptor. Phosphothreonine; by LKB1 is present on threonine 189. In terms of domain architecture, UBA spans 314 to 356 (ELDPDVLESMASLGCFRDRERLHRELRSEEENQEKMIYYLLLD). Over residues 362 to 383 (PSCEDQDLPPRNDVDPPRKRVD) the composition is skewed to basic and acidic residues. The disordered stretch occupies residues 362–548 (PSCEDQDLPP…SPGGGVGGAA (187 aa)). Phosphoserine occurs at positions 399, 443, 447, and 450. Residues 430–457 (SRSVSGASTGLSSSPLSSPRSPVFSFSP) are compositionally biased toward low complexity. Omega-N-methylarginine occurs at positions 466, 481, 484, and 498. The segment covering 491–508 (QPPPPSARSTPLPGPPGS) has biased composition (pro residues). Serine 508 is modified (phosphoserine). Positions 509 to 533 (PRSSGGTPLHSPLHTPRASPTGTPG) are enriched in low complexity. The residue at position 525 (arginine 525) is an Omega-N-methylarginine. A phosphothreonine mark is found at threonine 529 and threonine 535. Arginine 550 bears the Omega-N-methylarginine mark. Threonine 583 is modified (phosphothreonine). A phosphoserine mark is found at serine 586, serine 587, and serine 601. Residues 719 to 778 (QPSVQALADEKNGAQTRPAGAPPRSLQPPPGRPDPELSSSPRRGPPKDKKLLATNGTPLP) are disordered.

The protein belongs to the protein kinase superfamily. CAMK Ser/Thr protein kinase family. SNF1 subfamily. Mg(2+) serves as cofactor. Phosphorylated at Thr-189 by STK11/LKB1 in complex with STE20-related adapter-alpha (STRADA) pseudo kinase and CAB39. Not phosphorylated at Thr-189 by CaMKK2. In contrast, it is phosphorylated and activated by CaMKK1. May be inactivated via dephosphorylation of Thr-189 by PP2C. In terms of tissue distribution, widely expressed, with highest levels in brain and testis. Protein levels remain constant throughout the cell cycle.

Its subcellular location is the cytoplasm. The protein localises to the nucleus. The protein resides in the cytoskeleton. It localises to the microtubule organizing center. It is found in the centrosome. Its subcellular location is the synapse. The protein localises to the presynaptic active zone. The protein resides in the cytoplasmic vesicle. It localises to the secretory vesicle. It is found in the synaptic vesicle. The catalysed reaction is L-seryl-[protein] + ATP = O-phospho-L-seryl-[protein] + ADP + H(+). It catalyses the reaction L-threonyl-[protein] + ATP = O-phospho-L-threonyl-[protein] + ADP + H(+). It carries out the reaction L-seryl-[tau protein] + ATP = O-phospho-L-seryl-[tau protein] + ADP + H(+). The enzyme catalyses L-threonyl-[tau protein] + ATP = O-phospho-L-threonyl-[tau protein] + ADP + H(+). Its activity is regulated as follows. Activated by phosphorylation on Thr-189 by STK11/LKB1. Serine/threonine-protein kinase that plays a key role in polarization of neurons and centrosome duplication. Phosphorylates CDC25B, CDC25C, MAPT/TAU, RIMS1, TUBG1, TUBG2 and WEE1. Following phosphorylation and activation by STK11/LKB1, acts as a key regulator of polarization of cortical neurons, probably by mediating phosphorylation of microtubule-associated proteins such as MAPT/TAU at 'Thr-529' and 'Ser-579'. Also regulates neuron polarization by mediating phosphorylation of WEE1 at 'Ser-642' in postmitotic neurons, leading to down-regulate WEE1 activity in polarized neurons. In neurons, localizes to synaptic vesicles and plays a role in neurotransmitter release, possibly by phosphorylating RIMS1. Also acts as a positive regulator of centrosome duplication by mediating phosphorylation of gamma-tubulin (TUBG1 and TUBG2) at 'Ser-131', leading to translocation of gamma-tubulin and its associated proteins to the centrosome. Involved in the UV-induced DNA damage checkpoint response, probably by inhibiting CDK1 activity through phosphorylation and activation of WEE1, and inhibition of CDC25B and CDC25C. This is Serine/threonine-protein kinase BRSK1 (BRSK1) from Homo sapiens (Human).